Here is a 447-residue protein sequence, read N- to C-terminus: MNAWEVNFDGLVGLTHHYAGLSFGNEASTRHCFQVSNPRLAAKQGLLKMKTLADAGFPQAVIPPHERPFIPVLRQLGFSGSDEQVLEKVARQAPHWLSSASSASPMWVANAATIAPSADTLDGKVHLTVANLNNKFHRSLEAPVTESLLKAIFNDEEKFSVHSALPQVALLGDEGAANHNRLGGHYGEPGIQLFVYGREEGNDTRPSRYPARQTREASEAVARLNQVNPQQVIFAQQNPDVIDQGVFHNDVIAVSNRQVLFCHQQAFARQSQLLANLRSRVNGFMAIEVPAAQVSVSDAVSTYLFNSQLLSRDDGSMMLVLPQECREHAGVWRYLNELLAADNPISSLKVFDLRESMANGGGPACLRLRVVLTEEERRAVNPAVMMNDTLFNALNDWVDRYYRDRLTAADLADPQLLREGREALDTLTQLLDLGSVYPFQREGGGNG.

Substrate-binding positions include 19–28 (AGLSFGNEAS), Asn-110, and 137–138 (HR). Residue Glu-174 is part of the active site. Position 212 (Arg-212) interacts with substrate. The active site involves His-248. Substrate is bound by residues Asp-250 and Asn-359. Residue Cys-365 is the Nucleophile of the active site.

Belongs to the succinylarginine dihydrolase family. In terms of assembly, homodimer.

It catalyses the reaction N(2)-succinyl-L-arginine + 2 H2O + 2 H(+) = N(2)-succinyl-L-ornithine + 2 NH4(+) + CO2. It functions in the pathway amino-acid degradation; L-arginine degradation via AST pathway; L-glutamate and succinate from L-arginine: step 2/5. Its function is as follows. Catalyzes the hydrolysis of N(2)-succinylarginine into N(2)-succinylornithine, ammonia and CO(2). In Escherichia coli O6:K15:H31 (strain 536 / UPEC), this protein is N-succinylarginine dihydrolase.